A 477-amino-acid polypeptide reads, in one-letter code: Cytochrome P450 716A1 (477 aa).

The chain crosses the membrane as a helical span at residues 2 to 22; that stretch reads YMAIMIILFLSSILLSLLLLL. Position 424 (Cys-424) interacts with heme.

This sequence belongs to the cytochrome P450 family. Heme is required as a cofactor.

It is found in the membrane. Possesses triterpene oxidizing activity. Catalyzes the C28 hydroxylation of alpha-amyrin, beta-amyrin, and lupeol, producing uvaol, erythrodiol, and betulin, respectively. Catalyzes the C28 carboxylation of alpha- and beta-amyrin. The sequence is that of Cytochrome P450 716A1 from Arabidopsis thaliana (Mouse-ear cress).